A 416-amino-acid polypeptide reads, in one-letter code: Phosphoglycerate kinase (416 aa).

(2R)-3-phosphoglycerate contacts are provided by valine 22, aspartate 23, phenylalanine 24, asparagine 25, glutamine 37, arginine 38, serine 61, histidine 62, glycine 64, arginine 65, leucine 120, arginine 121, histidine 168, and arginine 169. Glycine 212 is a binding site for ADP. A CDP-binding site is contributed by glycine 212. AMP-binding residues include alanine 213 and lysine 214. Alanine 213 is an ATP binding site. Residue alanine 213 coordinates Mg(2+). Aspartate 217 lines the CDP pocket. Aspartate 217 contributes to the Mg(2+) binding site. Lysine 218 provides a ligand contact to AMP. ATP is bound at residue lysine 218. Glycine 236 contributes to the ADP binding site. Residue glycine 236 participates in CDP binding. Residues glycine 237 and glycine 311 each coordinate AMP. Residues glycine 237 and glycine 311 each coordinate ATP. Residues glycine 336 and phenylalanine 341 each coordinate CDP. Phenylalanine 341 serves as a coordination point for ADP. An AMP-binding site is contributed by glutamate 342. Positions 342, 373, and 374 each coordinate ATP. Aspartate 373 contributes to the Mg(2+) binding site.

This sequence belongs to the phosphoglycerate kinase family. As to quaternary structure, monomer. Mg(2+) is required as a cofactor. In terms of tissue distribution, expressed in all cells of the worm (at protein level), higher expression in the cells associated with the tubercles (tegumental modifications), the muscle and along the tegument.

The catalysed reaction is (2R)-3-phosphoglycerate + ATP = (2R)-3-phospho-glyceroyl phosphate + ADP. It participates in carbohydrate degradation; glycolysis; pyruvate from D-glyceraldehyde 3-phosphate: step 2/5. Involved in the seventh step in glycolysis. Catalyzes the conversion of 1,3-bisphosphoglycerate ((2R)-3-phospho-glyceroyl phosphate) to 3-phosphoglycerate ((2R)-3-phosphoglycerate) and results in the formation of ATP. Associated with the tegument to provide the energy needed for the tegumental repair resulting from immune damage. This is Phosphoglycerate kinase (PGK) from Schistosoma mansoni (Blood fluke).